Reading from the N-terminus, the 495-residue chain is MCVRLARNLFKTSDFIPCRRVILAVSGGSDSLALMFLVKEYLETLLIPPEIIAVTVDHQLRKESAREAEIVAEICRDHHIKHITVRWEGKKPKTHLAFSARIARYDLLVQEAQKQGASLIMTGHTLNDQVETYQMRCQRLQKRRGALRDEVGAMCDGGAASGFAGALRDKAGARRDEDYVRETRKNIAEKSYGVLYERGLSCIPREALLHRKVRLIRPLLGVQRQTLRNYLRLQGKTWIDDPTNEDRNFERVRVRQSLSSQKLVNIAQKINKAAWQRRQQAQNIADLILALDITVQYGRCFIVKPAPFLQKHSCFPFVVGLFAVLMGGGFYLLSNQKLSMLVQKLCLNSPEKRRFTCAGCVIEYNKEGIALWRERRNMKEALVEPDETLLWDGRYRITNHGSEAIKVGVANLEQLKSLLQNSNSNLEKPHFPSLQSLLMLSNDKGCDIPELISQAIIHKNVIIKRIMAPFDWLSSREDAALVNVVEPFFNLEVKR.

26–31 (SGGSDS) contributes to the ATP binding site.

The protein belongs to the tRNA(Ile)-lysidine synthase family.

It localises to the cytoplasm. The enzyme catalyses cytidine(34) in tRNA(Ile2) + L-lysine + ATP = lysidine(34) in tRNA(Ile2) + AMP + diphosphate + H(+). Ligates lysine onto the cytidine present at position 34 of the AUA codon-specific tRNA(Ile) that contains the anticodon CAU, in an ATP-dependent manner. Cytidine is converted to lysidine, thus changing the amino acid specificity of the tRNA from methionine to isoleucine. The polypeptide is tRNA(Ile)-lysidine synthase (Bartonella tribocorum (strain CIP 105476 / IBS 506)).